The following is a 454-amino-acid chain: MKHSLTIIGAGLAGCEAAWQAARRGVSVTLHEMKPEKRSPAHHLPGLAELVCSNSLRGDSLENAVGLLKEELRRGGSLIMEAAEATRVPAGGALAVDRQLFSDYVTAKITAHPLINLVHGEMDAIPAEGTVIIASGPLTSDALAASLSGLTGDRLYFYDSIAPIVTADSLDREKVFAASRYGKGDGDDYLNCPLDREQYQAFVEQLNRGEKVAAREFEKLVHFEGCMPVEELAGRGEDTLRFGPMKPVGLTDPRTGIEPHAVIQLRAENREKTMYNLVGFQTKLTWPEQRRIFRTIPGLERAEFVRLGSMHRNTFINAPALLQPTQQLRSDPRIFFAGQITGVEGYVESAGSGFLAGITAARLLTGMPDPAVPPAETALGALVSHITNADVRHFQPMNVNYGLFPDLEGRIKKKERRGKLAERALASLSGWLERVSPPSRETGEPTGAEQVDLA.

An FAD-binding site is contributed by 9 to 14; it reads GAGLAG. The tract at residues 432–454 is disordered; the sequence is LERVSPPSRETGEPTGAEQVDLA.

It belongs to the MnmG family. TrmFO subfamily. It depends on FAD as a cofactor.

It localises to the cytoplasm. It carries out the reaction uridine(54) in tRNA + (6R)-5,10-methylene-5,6,7,8-tetrahydrofolate + NADH + H(+) = 5-methyluridine(54) in tRNA + (6S)-5,6,7,8-tetrahydrofolate + NAD(+). The catalysed reaction is uridine(54) in tRNA + (6R)-5,10-methylene-5,6,7,8-tetrahydrofolate + NADPH + H(+) = 5-methyluridine(54) in tRNA + (6S)-5,6,7,8-tetrahydrofolate + NADP(+). In terms of biological role, catalyzes the folate-dependent formation of 5-methyl-uridine at position 54 (M-5-U54) in all tRNAs. The sequence is that of Methylenetetrahydrofolate--tRNA-(uracil-5-)-methyltransferase TrmFO from Pelobacter propionicus (strain DSM 2379 / NBRC 103807 / OttBd1).